Reading from the N-terminus, the 330-residue chain is Geranylgeranyl diphosphate synthase (330 aa).

Positions 43, 46, and 75 each coordinate isopentenyl diphosphate. Positions 82 and 86 each coordinate Mg(2+). R91 lines the an all-trans-polyprenyl diphosphate pocket. R92 is an isopentenyl diphosphate binding site. 5 residues coordinate an all-trans-polyprenyl diphosphate: K175, T176, Q213, K230, and K240.

The protein belongs to the FPP/GGPP synthase family. It depends on Mg(2+) as a cofactor.

The enzyme catalyses isopentenyl diphosphate + (2E,6E)-farnesyl diphosphate = (2E,6E,10E)-geranylgeranyl diphosphate + diphosphate. It participates in isoprenoid biosynthesis; geranylgeranyl diphosphate biosynthesis; geranylgeranyl diphosphate from farnesyl diphosphate and isopentenyl diphosphate: step 1/1. Its function is as follows. Catalyzes the condensation of isopentenyl pyrophosphate with the allylic pyrophosphates to yield geranylgeranyl diphosphate (GGPP) which is a precursor of the ether-linked lipids. It is able to use dimethylallyl diphosphate (DMAPP), geranyl diphosphate (GPP), and (all-E)-geranyl diphosphate (E-FPP) as an allylic substrate. The sequence is that of Geranylgeranyl diphosphate synthase (gds) from Sulfolobus acidocaldarius (strain ATCC 33909 / DSM 639 / JCM 8929 / NBRC 15157 / NCIMB 11770).